An 855-amino-acid chain; its full sequence is Envelope glycoprotein gp160 (855 aa).

The N-terminal stretch at 1-31 (MRAREIERNCPNLWKWGIMLLGILMICSAAD) is a signal peptide. Over 32 to 683 (NLWVTVYYGV…ITQWLWYIKI (652 aa)) the chain is Extracellular. A disulfide bond links Cys-53 and Cys-73. Asn-87, Asn-129, Asn-140, Asn-145, Asn-154, Asn-158, Asn-186, Asn-189, Asn-199, Asn-236, Asn-243, Asn-264, Asn-278, Asn-291, and Asn-297 each carry an N-linked (GlcNAc...) asparagine; by host glycan. Disulfide bonds link Cys-118–Cys-207, Cys-125–Cys-198, Cys-130–Cys-155, Cys-220–Cys-249, and Cys-230–Cys-241. Residues 130–154 (CTDESDEWMGNVTGKNVTEDIRMKN) are V1. The V2 stretch occupies residues 155–198 (CSFNITTVVRDKTKQVHALFYRLDIVPIDNDNSTNSTNYRLINC). The interval 298-331 (CTRPYKNTRQSTPIGLGQALYTTRGRTKIIGQAH) is V3. Cys-298 and Cys-332 are disulfide-bonded. 3 N-linked (GlcNAc...) asparagine; by host glycosylation sites follow: Asn-333, Asn-340, and Asn-355. The tract at residues 364–374 (SSGGDAEITTH) is CD4-binding loop. 2 disulfide bridges follow: Cys-378–Cys-444 and Cys-385–Cys-417. A V4 region spans residues 385–417 (CNTSGLFNSTWNINNSEGANSTESDNKLITLQC). Asn-386, Asn-392, Asn-398, Asn-404, Asn-443, Asn-447, Asn-460, Asn-461, and Asn-464 each carry an N-linked (GlcNAc...) asparagine; by host glycan. V5 regions lie at residues 459–470 (TNNSSNETFRPG) and 462–470 (SSNETFRPG). The interval 511 to 531 (AIGLGAMFLGFLGAAGSTMGA) is fusion peptide. Residues 573 to 591 (KQLQARILAVERYLKDQQL) are immunosuppression. A disulfide bridge connects residues Cys-597 and Cys-603. 5 N-linked (GlcNAc...) asparagine; by host glycosylation sites follow: Asn-610, Asn-615, Asn-624, Asn-636, and Asn-673. Positions 632-666 (REIDNYTGLIYRLIEESQTQQEKNEQELLELDKWA) form a coiled coil. An MPER; binding to GalCer region spans residues 661 to 682 (ELDKWASLWNWFNITQWLWYIK). Residues 684–704 (FIMIVGGLIGLRIVFAVLSLV) form a helical membrane-spanning segment. The Cytoplasmic portion of the chain corresponds to 705–855 (NRVRQGYSPL…IRQGLERLLL (151 aa)). Positions 711-714 (YSPL) match the YXXL motif; contains endocytosis signal motif. Cys-763 is lipidated: S-palmitoyl cysteine; by host. The short motif at 854-855 (LL) is the Di-leucine internalization motif element.

It belongs to the HIV-1 env protein family. In terms of assembly, the mature envelope protein (Env) consists of a homotrimer of non-covalently associated gp120-gp41 heterodimers. The resulting complex protrudes from the virus surface as a spike. There seems to be as few as 10 spikes on the average virion. Interacts with host CD4, CCR5 and CXCR4. Gp120 also interacts with the C-type lectins CD209/DC-SIGN and CLEC4M/DC-SIGNR (collectively referred to as DC-SIGN(R)). Gp120 and gp41 interact with GalCer. Gp120 interacts with host ITGA4/ITGB7 complex; on CD4+ T-cells, this interaction results in rapid activation of integrin ITGAL/LFA-1, which facilitates efficient cell-to-cell spreading of HIV-1. Gp120 interacts with cell-associated heparan sulfate; this interaction increases virus infectivity on permissive cells and may be involved in infection of CD4- cells. The mature envelope protein (Env) consists of a homotrimer of non-covalently associated gp120-gp41 heterodimers. The resulting complex protrudes from the virus surface as a spike. There seems to be as few as 10 spikes on the average virion. Highly glycosylated by host. The high number of glycan on the protein is reffered to as 'glycan shield' because it contributes to hide protein sequence from adaptive immune system. In terms of processing, palmitoylation of the transmembrane protein and of Env polyprotein (prior to its proteolytic cleavage) is essential for their association with host cell membrane lipid rafts. Palmitoylation is therefore required for envelope trafficking to classical lipid rafts, but not for viral replication. Post-translationally, specific enzymatic cleavages in vivo yield mature proteins. Envelope glycoproteins are synthesized as an inactive precursor that is heavily N-glycosylated and processed likely by host cell furin in the Golgi to yield the mature SU and TM proteins. The cleavage site between SU and TM requires the minimal sequence [KR]-X-[KR]-R. About 2 of the 9 disulfide bonds of gp41 are reduced by P4HB/PDI, following binding to CD4 receptor.

It localises to the virion membrane. Its subcellular location is the host cell membrane. It is found in the host endosome membrane. In terms of biological role, oligomerizes in the host endoplasmic reticulum into predominantly trimers. In a second time, gp160 transits in the host Golgi, where glycosylation is completed. The precursor is then proteolytically cleaved in the trans-Golgi and thereby activated by cellular furin or furin-like proteases to produce gp120 and gp41. Its function is as follows. Attaches the virus to the host lymphoid cell by binding to the primary receptor CD4. This interaction induces a structural rearrangement creating a high affinity binding site for a chemokine coreceptor like CXCR4 and/or CCR5. Acts as a ligand for CD209/DC-SIGN and CLEC4M/DC-SIGNR, which are respectively found on dendritic cells (DCs), and on endothelial cells of liver sinusoids and lymph node sinuses. These interactions allow capture of viral particles at mucosal surfaces by these cells and subsequent transmission to permissive cells. HIV subverts the migration properties of dendritic cells to gain access to CD4+ T-cells in lymph nodes. Virus transmission to permissive T-cells occurs either in trans (without DCs infection, through viral capture and transmission), or in cis (following DCs productive infection, through the usual CD4-gp120 interaction), thereby inducing a robust infection. In trans infection, bound virions remain infectious over days and it is proposed that they are not degraded, but protected in non-lysosomal acidic organelles within the DCs close to the cell membrane thus contributing to the viral infectious potential during DCs' migration from the periphery to the lymphoid tissues. On arrival at lymphoid tissues, intact virions recycle back to DCs' cell surface allowing virus transmission to CD4+ T-cells. Functionally, acts as a class I viral fusion protein. Under the current model, the protein has at least 3 conformational states: pre-fusion native state, pre-hairpin intermediate state, and post-fusion hairpin state. During fusion of viral and target intracellular membranes, the coiled coil regions (heptad repeats) assume a trimer-of-hairpins structure, positioning the fusion peptide in close proximity to the C-terminal region of the ectodomain. The formation of this structure appears to drive apposition and subsequent fusion of viral and target cell membranes. Complete fusion occurs in host cell endosomes and is dynamin-dependent, however some lipid transfer might occur at the plasma membrane. The virus undergoes clathrin-dependent internalization long before endosomal fusion, thus minimizing the surface exposure of conserved viral epitopes during fusion and reducing the efficacy of inhibitors targeting these epitopes. Membranes fusion leads to delivery of the nucleocapsid into the cytoplasm. The polypeptide is Envelope glycoprotein gp160 (Homo sapiens (Human)).